The primary structure comprises 385 residues: Muconate cycloisomerase 1-2 (385 aa).

The active site involves Lys171. Mn(2+)-binding residues include Glu226 and Asp251.

It belongs to the mandelate racemase/muconate lactonizing enzyme family. In terms of assembly, homooctamer. It depends on Mn(2+) as a cofactor.

The enzyme catalyses (S)-muconolactone = cis,cis-muconate + H(+). It functions in the pathway aromatic compound metabolism; beta-ketoadipate pathway; 5-oxo-4,5-dihydro-2-furylacetate from catechol: step 2/3. In terms of biological role, catalyzes a syn cycloisomerization. The protein is Muconate cycloisomerase 1-2 (catB2) of Acinetobacter lwoffii.